A 390-amino-acid polypeptide reads, in one-letter code: GTPase Obg (390 aa).

An Obg domain is found at 1 to 159; the sequence is MKFIDEALIR…RDLQLELMLL (159 aa). The OBG-type G domain maps to 160–333; it reads ADVGMLGLPN…LCRDIMDFIE (174 aa). Residues 166–173, 191–195, 213–216, 283–286, and 314–316 each bind GTP; these read GLPNAGKS, FTTLV, DIPG, NKID, and SAV. Mg(2+)-binding residues include S173 and T193. The interval 363–390 is disordered; sequence DHQFEDEDEDWDDWSEEDEEGVETIYKP. The segment covering 366–384 has biased composition (acidic residues); the sequence is FEDEDEDWDDWSEEDEEGV.

It belongs to the TRAFAC class OBG-HflX-like GTPase superfamily. OBG GTPase family. In terms of assembly, monomer. Mg(2+) is required as a cofactor.

Its subcellular location is the cytoplasm. An essential GTPase which binds GTP, GDP and possibly (p)ppGpp with moderate affinity, with high nucleotide exchange rates and a fairly low GTP hydrolysis rate. Plays a role in control of the cell cycle, stress response, ribosome biogenesis and in those bacteria that undergo differentiation, in morphogenesis control. The protein is GTPase Obg of Pasteurella multocida (strain Pm70).